Reading from the N-terminus, the 344-residue chain is Anthranilate phosphoribosyltransferase (344 aa).

5-phospho-alpha-D-ribose 1-diphosphate is bound by residues Gly-79, 82-83, Thr-87, 89-92, 107-115, and Ser-119; these read GD, NIST, and KHGNRSVSS. An anthranilate-binding site is contributed by Gly-79. Mg(2+) is bound at residue Ser-91. Position 110 (Asn-110) interacts with anthranilate. Arg-165 provides a ligand contact to anthranilate. Residues Asp-224 and Glu-225 each contribute to the Mg(2+) site.

This sequence belongs to the anthranilate phosphoribosyltransferase family. Homodimer. Mg(2+) is required as a cofactor.

It carries out the reaction N-(5-phospho-beta-D-ribosyl)anthranilate + diphosphate = 5-phospho-alpha-D-ribose 1-diphosphate + anthranilate. The protein operates within amino-acid biosynthesis; L-tryptophan biosynthesis; L-tryptophan from chorismate: step 2/5. Functionally, catalyzes the transfer of the phosphoribosyl group of 5-phosphorylribose-1-pyrophosphate (PRPP) to anthranilate to yield N-(5'-phosphoribosyl)-anthranilate (PRA). The chain is Anthranilate phosphoribosyltransferase from Salinibacter ruber (strain DSM 13855 / M31).